Reading from the N-terminus, the 422-residue chain is Interleukin-11 receptor subunit alpha (422 aa).

Residues 1-22 (MSSSCSGLSRVLVAVATALVSA) form the signal peptide. At 24–370 (SPCPQAWGPP…DSVEQVAVLA (347 aa)) the chain is on the extracellular side. In terms of domain architecture, Ig-like C2-type spans 27 to 110 (PQAWGPPGVQ…LGGTVTLQLG (84 aa)). Cystine bridges form between C48–C94, C120–C130, and C170–C180. Fibronectin type-III domains are found at residues 112-219 (PPAR…LRPD) and 220-317 (PPQG…TPST). N127 carries N-linked (GlcNAc...) asparagine glycosylation. An N-linked (GlcNAc...) asparagine glycan is attached at N194. Positions 304–308 (WSTWS) match the WSXWS motif motif. The disordered stretch occupies residues 335 to 355 (EVEPQVDSPAPPRPSLQPHPR). A helical membrane pass occupies residues 371–391 (SLGILSFLGLVAGALALGLWL). The Cytoplasmic portion of the chain corresponds to 392–422 (RLRRGGKDGSPKPGFLASVIPVDRRPGAPNL). Positions 398–422 (KDGSPKPGFLASVIPVDRRPGAPNL) are disordered. Residues 413-422 (VDRRPGAPNL) are compositionally biased toward basic and acidic residues.

It belongs to the type I cytokine receptor family. Type 3 subfamily. In terms of assembly, on IL11 binding, forms a multimer complex with IL6ST/gp130. Post-translationally, a short soluble form is also released from the membrane by proteolysis. The sIL11RA is formed either by limited proteolysis of membrane-bound receptors, a process referred to as ectodomain shedding, or directly secreted from the cells after alternative mRNA splicing. mIL11RA is cleaved by the proteases ADAM10, ELANE and PRTN3. In terms of tissue distribution, expressed in a number of cell lines, including the myelogenous leukemia cell line K-562, the megakaryocytic leukemia cell line M-07e, the erythroleukemia cell line TF-1, and the osteosarcoma cell lines, MG-63 and SaOS-2. Also expressed in normal and malignant prostate epithelial cell lines. Expression levels are increased in prostate carcinoma.

It is found in the membrane. Its subcellular location is the secreted. Receptor for interleukin-11 (IL11). The receptor systems for IL6, LIF, OSM, CNTF, IL11 and CT1 can utilize IL6ST for initiating signal transmission. The IL11/IL11RA/IL6ST complex may be involved in the control of proliferation and/or differentiation of skeletogenic progenitor or other mesenchymal cells. Essential for the normal development of craniofacial bones and teeth. Restricts suture fusion and tooth number. Functionally, soluble form of IL11 receptor (sIL11RA) that acts as an agonist of IL11 activity. The IL11:sIL11RA complex binds to IL6ST/gp130 on cell surfaces and induces signaling also on cells that do not express membrane-bound IL11RA in a process called IL11 trans-signaling. This Homo sapiens (Human) protein is Interleukin-11 receptor subunit alpha.